Consider the following 509-residue polypeptide: Heat shock 70 kDa protein 14 (509 aa).

This sequence belongs to the heat shock protein 70 family. As to quaternary structure, component of ribosome-associated complex (RAC), a heterodimer composed of Hsp70/DnaK-type chaperone HSPA14 and Hsp40/DnaJ-type chaperone DNAJC2.

It localises to the cytoplasm. The protein localises to the cytosol. Component of the ribosome-associated complex (RAC), a complex involved in folding or maintaining nascent polypeptides in a folding-competent state. In the RAC complex, binds to the nascent polypeptide chain, while DNAJC2 stimulates its ATPase activity. This chain is Heat shock 70 kDa protein 14 (Hspa14), found in Rattus norvegicus (Rat).